A 226-amino-acid polypeptide reads, in one-letter code: Orotate phosphoribosyltransferase (226 aa).

Position 29 (Lys-29) interacts with 5-phospho-alpha-D-ribose 1-diphosphate. Position 37–38 (37–38 (FF)) interacts with orotate. Residues 75-76 (YK), Arg-101, Lys-102, Lys-105, His-107, and 126-134 (DDVISAGTS) contribute to the 5-phospho-alpha-D-ribose 1-diphosphate site. Orotate-binding residues include Ser-130 and Arg-158.

Belongs to the purine/pyrimidine phosphoribosyltransferase family. PyrE subfamily. Homodimer. It depends on Mg(2+) as a cofactor.

The catalysed reaction is orotidine 5'-phosphate + diphosphate = orotate + 5-phospho-alpha-D-ribose 1-diphosphate. Its pathway is pyrimidine metabolism; UMP biosynthesis via de novo pathway; UMP from orotate: step 1/2. In terms of biological role, catalyzes the transfer of a ribosyl phosphate group from 5-phosphoribose 1-diphosphate to orotate, leading to the formation of orotidine monophosphate (OMP). The polypeptide is Orotate phosphoribosyltransferase (Ralstonia nicotianae (strain ATCC BAA-1114 / GMI1000) (Ralstonia solanacearum)).